Consider the following 1242-residue polypeptide: Structural polyprotein (1242 aa).

The tract at residues 14–101 (WRPRMPPRPW…PKRKPGRRER (88 aa)) is disordered. Over residues 26–42 (RMPTMQRPDQQARQMQQ) the composition is skewed to low complexity. A host transcription inhibition region spans residues 35 to 66 (QQARQMQQLIAAVSTLALRQNAAAPQRGKKKQ). The short motif at 59–96 (PQRGKKKQPRRKKPKPQPEKPKKQEQKPKQKKAPKRKP) is the Nuclear localization signal element. Residues 61-73 (RGKKKQPRRKKPK) show a composition bias toward basic residues. Residues 74–86 (PQPEKPKKQEQKP) show a composition bias toward basic and acidic residues. The segment at 82-111 (QEQKPKQKKAPKRKPGRRERMCMKIEHDCI) is binding to the viral RNA. Residues 87–98 (KQKKAPKRKPGR) are compositionally biased toward basic residues. Residues 96–110 (PGRRERMCMKIEHDC) are ribosome-binding. Cys-110 and Cys-125 are disulfide-bonded. The Peptidase S3 domain occupies 110–258 (CIFEVKHEGK…KITPEGTVEW (149 aa)). Catalysis depends on His-136, which acts as the Charge relay system. Positions 141 to 151 (IDNADLARLSY) match the Nuclear export signal motif. An interaction with spike glycoprotein E2 region spans residues 152-157 (KKSSKY). Asp-158 acts as the Charge relay system in catalysis. A dimerization of the capsid protein region spans residues 180–190 (PEGHYNWHYGA). Residue Ser-210 is the Charge relay system of the active site. A dimerization of the capsid protein region spans residues 216–220 (DNKGP). A functions as an uncleaved signal peptide for the precursor of protein E3/E2 region spans residues 259–272 (AASTVTAMCLLTNI). 8 disulfides stabilise this stretch: Cys-267–Cys-276, Cys-281–Cys-285, Cys-284–Cys-316, Cys-343–Cys-449, Cys-346–Cys-352, Cys-415–Cys-429, Cys-477–Cys-589, and Cys-527–Cys-544. Asn-271 carries N-linked (GlcNAc...) asparagine; by host glycosylation. Residues 325 to 690 (STANHFNAYK…YYYGLHPTTT (366 aa)) are Extracellular-facing. Interaction with host Mxra8 receptor regions lie at residues 350-353 (HSCH) and 386-388 (HDH). Interaction with host Mxra8 receptor regions lie at residues 508–511 (QSGN) and 540–546 (TINSCTV). N-linked (GlcNAc...) asparagine; by host glycosylation is present at Asn-586. A helical membrane pass occupies residues 691 to 711 (IVVVIRVSVVVLLSFAASVYM). Residues 712–746 (CVVARTKCLTPYALTPGAVVPVTIGVLCCAPKAHA) lie on the Cytoplasmic side of the membrane. Residues 714–718 (VARTK) are interaction with the capsid protein. 3 S-palmitoyl cysteine; by host lipidation sites follow: Cys-719, Cys-739, and Cys-740. The interval 719–739 (CLTPYALTPGAVVPVTIGVLC) is transient transmembrane before p62-6K protein processing. Cysteines 719 and 740 form a disulfide. Topologically, residues 747 to 761 (ASFAEGMAYLWDNNQ) are extracellular. Asn-760 carries N-linked (GlcNAc...) asparagine; by host glycosylation. Residues 762–782 (SMFWMELTGPLALLILATCCA) form a helical membrane-spanning segment. The Cytoplasmic segment spans residues 783-785 (RSL). Residues 786 to 806 (LSCCKGSFLVAMSIGSAVASA) form a helical membrane-spanning segment. Residues 807–1217 (YEHTAIIPNQ…STAMTWAQHL (411 aa)) are Extracellular-facing. Disulfide bonds link Cys-855–Cys-920, Cys-868–Cys-900, Cys-869–Cys-902, and Cys-874–Cys-884. Positions 890–907 (VYPFMWGGAYCFCDSENT) are E1 fusion peptide loop. N-linked (GlcNAc...) asparagine; by host glycans are attached at residues Asn-947 and Asn-1076. Cystine bridges form between Cys-1065/Cys-1077, Cys-1107/Cys-1180, Cys-1112/Cys-1184, and Cys-1134/Cys-1174. The chain crosses the membrane as a helical span at residues 1218-1238 (AGGVGLLIALAVLILVIVTCV). Residue Cys-1237 is the site of S-palmitoyl cysteine; by host attachment. Residues 1239 to 1242 (TLRR) lie on the Cytoplasmic side of the membrane.

Homodimer. Homomultimer. Interacts with host karyopherin KPNA4; this interaction allows the nuclear import of the viral capsid protein. Interacts with spike glycoprotein E2. Interacts with host IRAK1; the interaction leads to inhibition of IRAK1-dependent signaling. In terms of assembly, the precursor of protein E3/E2 and E1 form a heterodimer shortly after synthesis. As to quaternary structure, the precursor of protein E3/E2 and E1 form a heterodimer shortly after synthesis. Processing of the precursor of protein E3/E2 into E2 and E3 results in a heterodimer of the spike glycoproteins E2 and E1. Spike at virion surface are constituted of a trimer of E2-E1 heterodimers. After target cell attachment and endocytosis, E1 change conformation to form homotrimers. Interacts with 6K protein. Interacts with spike glycoprotein E1. Processing of the precursor of protein E3/E2 into E2 and E3 results in a heterodimer of the spike glycoproteins E2 and E1. Spike at virion surface are constituted of a trimer of E2-E1 heterodimers. Interacts with 6K protein. Interacts with host MXRA8; this interaction mediates virus entry. In terms of assembly, oligomer. Interacts with spike glycoprotein E1. Interacts with spike glycoprotein E2. Post-translationally, structural polyprotein: Specific enzymatic cleavages in vivo yield mature proteins. Capsid protein is auto-cleaved during polyprotein translation, unmasking a signal peptide at the N-terminus of the precursor of E3/E2. The remaining polyprotein is then targeted to the host endoplasmic reticulum, where host signal peptidase cleaves it into pE2, 6K and E1 proteins. pE2 is further processed to mature E3 and E2 by host furin in trans-Golgi vesicle. Palmitoylated via thioester bonds. These palmitoylations may induce disruption of the C-terminus transmembrane. This would result in the reorientation of E2 C-terminus from lumenal to cytoplasmic side. In terms of processing, N-glycosylated. Post-translationally, palmitoylated via thioester bonds.

It localises to the virion. It is found in the host cytoplasm. The protein localises to the host cell membrane. Its subcellular location is the host nucleus. The protein resides in the virion membrane. It localises to the host Golgi apparatus. It is found in the host trans-Golgi network. The protein localises to the host endoplasmic reticulum. It carries out the reaction Autocatalytic release of the core protein from the N-terminus of the togavirus structural polyprotein by hydrolysis of a -Trp-|-Ser- bond.. In terms of biological role, forms an icosahedral capsid with a T=4 symmetry composed of 240 copies of the capsid protein surrounded by a lipid membrane through which penetrate 80 spikes composed of trimers of E1-E2 heterodimers. The capsid protein binds to the viral RNA genome at a site adjacent to a ribosome binding site for viral genome translation following genome release. Possesses a protease activity that results in its autocatalytic cleavage from the nascent structural protein. Following its self-cleavage, the capsid protein transiently associates with ribosomes, and within several minutes the protein binds to viral RNA and rapidly assembles into icosahedric core particles. The resulting nucleocapsid eventually associates with the cytoplasmic domain of the spike glycoprotein E2 at the cell membrane, leading to budding and formation of mature virions. In case of infection, new virions attach to target cells and after clathrin-mediated endocytosis their membrane fuses with the host endosomal membrane. This leads to the release of the nucleocapsid into the cytoplasm, followed by an uncoating event necessary for the genomic RNA to become accessible. The uncoating might be triggered by the interaction of capsid proteins with ribosomes. Binding of ribosomes would release the genomic RNA since the same region is genomic RNA-binding and ribosome-binding. Specifically inhibits interleukin-1 receptor-associated kinase 1/IRAK1-dependent signaling during viral entry, representing a means by which the alphaviruses may evade innate immune detection and activation prior to viral gene expression. Its function is as follows. Provides the signal sequence for the translocation of the precursor of protein E3/E2 to the host endoplasmic reticulum. Furin-cleaved E3 remains associated with spike glycoprotein E1 and mediates pH protection of the latter during the transport via the secretory pathway. After virion release from the host cell, the assembly protein E3 is gradually released in the extracellular space. Functionally, plays a role in viral attachment to target host cell, by binding to the cell receptor MXRA8. Synthesized as a p62 precursor which is processed by furin at the cell membrane just before virion budding, giving rise to E2-E1 heterodimer. The p62-E1 heterodimer is stable, whereas E2-E1 is unstable and dissociate at low pH. p62 is processed at the last step, presumably to avoid E1 fusion activation before its final export to cell surface. E2 C-terminus contains a transitory transmembrane that would be disrupted by palmitoylation, resulting in reorientation of the C-terminal tail from lumenal to cytoplasmic side. This step is critical since E2 C-terminus is involved in budding by interacting with capsid proteins. This release of E2 C-terminus in cytoplasm occurs lately in protein export, and precludes premature assembly of particles at the endoplasmic reticulum membrane. Acts as a viroporin that participates in virus glycoprotein processing and transport to the plasma membrane, cell permeabilization and budding of viral particles. Disrupts the calcium homeostasis of the cell, probably at the endoplasmic reticulum level. This leads to cytoplasmic calcium elevation. Because of its lipophilic properties, the 6K protein is postulated to influence the selection of lipids that interact with the transmembrane domains of the glycoproteins, which, in turn, affects the deformability of the bilayer required for the extreme curvature that occurs as budding proceeds. Present in low amount in virions, about 3% compared to viral glycoproteins. In terms of biological role, class II viral fusion protein. Fusion activity is inactive as long as E1 is bound to E2 in mature virion. After virus attachment to target cell via host MXRA8 and endocytosis, acidification of the endosome induce dissociation of E1/E2 heterodimer and concomitant trimerization of the E1 subunits. This E1 trimer is fusion active, and promotes release of viral nucleocapsid in cytoplasm after endosome and viral membrane fusion. Efficient fusion requires the presence of cholesterol and sphingolipid in the target membrane. The chain is Structural polyprotein from Mayaro virus (strain Brazil) (MAYV).